Consider the following 471-residue polypeptide: Vitellogenic carboxypeptidase (471 aa).

The N-terminal stretch at 1–19 (MVKFHLLVLIAFTCYTCSD) is a signal peptide. An N-linked (GlcNAc...) asparagine glycan is attached at asparagine 135. Active-site residues include serine 207, aspartate 391, and histidine 448.

Belongs to the peptidase S10 family. Synthesized in the fat body of vitellogenic females, secreted into the hemolymph and accumulates in yolk bodies of developing oocytes.

The protein resides in the secreted. Functionally, may play a role in activating hydrolytic enzymes that are involved in the degradation of yolk proteins in developing embryos or may function as an exopeptidase in the degradation of vitellogenin. This is Vitellogenic carboxypeptidase (VCP) from Aedes aegypti (Yellowfever mosquito).